A 265-amino-acid polypeptide reads, in one-letter code: Undecaprenyl-diphosphatase (265 aa).

7 consecutive transmembrane segments (helical) span residues 38–58 (SDMF…IIYW), 80–100 (LIVA…LGFE), 107–127 (PIAW…WAAA), 135–155 (ITWL…VFPG), 178–198 (TEFA…YELL), 216–236 (IAFV…LAYI), and 244–264 (FAIY…TGLI).

It belongs to the UppP family.

Its subcellular location is the cell inner membrane. The catalysed reaction is di-trans,octa-cis-undecaprenyl diphosphate + H2O = di-trans,octa-cis-undecaprenyl phosphate + phosphate + H(+). Functionally, catalyzes the dephosphorylation of undecaprenyl diphosphate (UPP). Confers resistance to bacitracin. The polypeptide is Undecaprenyl-diphosphatase (Rhizobium johnstonii (strain DSM 114642 / LMG 32736 / 3841) (Rhizobium leguminosarum bv. viciae)).